Here is a 916-residue protein sequence, read N- to C-terminus: Chitin synthase B (916 aa).

2 disordered regions span residues 1-84 (MAYQ…AGFH) and 114-141 (SPYARSETSSTEAWRQRQAPGGGGGGGL). An N-linked (GlcNAc...) asparagine glycan is attached at N18. Positions 60–75 (RGTSPVRPTSGYSLTE) are enriched in polar residues. N546 is a glycosylation site (N-linked (GlcNAc...) asparagine). The next 7 membrane-spanning stretches (helical) occupy residues 572–594 (MFFLHIQMLYNVFNTILTWFSLA), 628–648 (IINTIVKYVYLGLLLLQFILA), 663–683 (SFVVFGIIQIYVVVDALYLVV), 715–735 (IIIIALAATFGLYFVASFMYL), 743–763 (SFPAYMFVQSSYINVLNVYAF), 845–865 (LVTLWIFSNAFLAVCITSDGM), and 884–904 (ALLWSNAAVALVRFIGACWFL).

This sequence belongs to the chitin synthase family. Class III subfamily.

It is found in the cell membrane. It catalyses the reaction [(1-&gt;4)-N-acetyl-beta-D-glucosaminyl](n) + UDP-N-acetyl-alpha-D-glucosamine = [(1-&gt;4)-N-acetyl-beta-D-glucosaminyl](n+1) + UDP + H(+). In terms of biological role, polymerizes chitin, a structural polymer of the cell wall and septum, by transferring the sugar moiety of UDP-GlcNAc to the non-reducing end of the growing chitin polymer. Involved in hyphal growth and more particularly in branching. In Aspergillus oryzae (strain ATCC 42149 / RIB 40) (Yellow koji mold), this protein is Chitin synthase B.